The following is a 399-amino-acid chain: Putative glutamate--cysteine ligase 2 (399 aa).

A disordered region spans residues 377-399 (PAVGSSHGRTDPSRNGGPSHAGA).

Belongs to the glutamate--cysteine ligase type 2 family. YbdK subfamily.

The catalysed reaction is L-cysteine + L-glutamate + ATP = gamma-L-glutamyl-L-cysteine + ADP + phosphate + H(+). ATP-dependent carboxylate-amine ligase which exhibits weak glutamate--cysteine ligase activity. This is Putative glutamate--cysteine ligase 2 from Thermobifida fusca (strain YX).